The chain runs to 244 residues: Pyridoxine 5'-phosphate synthase (244 aa).

Asparagine 12 serves as a coordination point for 3-amino-2-oxopropyl phosphate. 14 to 15 (DH) is a 1-deoxy-D-xylulose 5-phosphate binding site. Arginine 23 is a 3-amino-2-oxopropyl phosphate binding site. The active-site Proton acceptor is histidine 48. Residues arginine 50 and histidine 55 each contribute to the 1-deoxy-D-xylulose 5-phosphate site. Glutamate 75 functions as the Proton acceptor in the catalytic mechanism. Threonine 105 contacts 1-deoxy-D-xylulose 5-phosphate. Catalysis depends on histidine 196, which acts as the Proton donor. 3-amino-2-oxopropyl phosphate contacts are provided by residues glycine 197 and 218–219 (GH).

It belongs to the PNP synthase family. In terms of assembly, homooctamer; tetramer of dimers.

The protein localises to the cytoplasm. It catalyses the reaction 3-amino-2-oxopropyl phosphate + 1-deoxy-D-xylulose 5-phosphate = pyridoxine 5'-phosphate + phosphate + 2 H2O + H(+). The protein operates within cofactor biosynthesis; pyridoxine 5'-phosphate biosynthesis; pyridoxine 5'-phosphate from D-erythrose 4-phosphate: step 5/5. Its function is as follows. Catalyzes the complicated ring closure reaction between the two acyclic compounds 1-deoxy-D-xylulose-5-phosphate (DXP) and 3-amino-2-oxopropyl phosphate (1-amino-acetone-3-phosphate or AAP) to form pyridoxine 5'-phosphate (PNP) and inorganic phosphate. In Alcanivorax borkumensis (strain ATCC 700651 / DSM 11573 / NCIMB 13689 / SK2), this protein is Pyridoxine 5'-phosphate synthase.